Reading from the N-terminus, the 440-residue chain is Protein disulfide-isomerase 5-2 (440 aa).

A signal peptide spans 1–23; sequence MRSLKLLLCWISFLTLSISISAS. The Thioredoxin domain occupies 24–139; it reads SDDQFTLDGT…LVRYLKKFVA (116 aa). Catalysis depends on nucleophile residues Cys61 and Cys64. Cys61 and Cys64 are joined by a disulfide. Position 160 is a phosphothreonine (Thr160). Asn171 carries N-linked (GlcNAc...) asparagine glycosylation. A helical membrane pass occupies residues 376-396; that stretch reads SMIGIRSVYILVFLVAVIMML. Residues 406–440 form a disordered region; sequence TGVRTATAVRERVDQATTVPEDESSEHKPSDKKED. Basic and acidic residues predominate over residues 430–440; that stretch reads SEHKPSDKKED.

This sequence belongs to the protein disulfide isomerase family. In terms of tissue distribution, widely expressed.

The protein localises to the membrane. Its function is as follows. Acts as a protein-folding catalyst that interacts with nascent polypeptides to catalyze the formation, isomerization, and reduction or oxidation of disulfide bonds. This Arabidopsis thaliana (Mouse-ear cress) protein is Protein disulfide-isomerase 5-2 (PDIL5-2).